Here is a 343-residue protein sequence, read N- to C-terminus: Putative adenosine/adenine deaminase (343 aa).

Zn(2+) contacts are provided by His-16, His-18, and His-204. His-18 is a binding site for substrate. Glu-207 serves as the catalytic Proton donor. Asp-285 contributes to the Zn(2+) binding site. Asp-286 lines the substrate pocket.

This sequence belongs to the metallo-dependent hydrolases superfamily. Adenosine and AMP deaminases family. Requires Zn(2+) as cofactor.

Functionally, putative nucleoside deaminase. May catalyze the hydrolytic deamination of adenosine or some similar substrate and play a role in purine metabolism. This Streptomyces coelicolor (strain ATCC BAA-471 / A3(2) / M145) protein is Putative adenosine/adenine deaminase.